A 220-amino-acid chain; its full sequence is Thiopurine S-methyltransferase (220 aa).

S-adenosyl-L-methionine contacts are provided by W10, L45, E66, and R123.

It belongs to the class I-like SAM-binding methyltransferase superfamily. TPMT family.

The protein localises to the cytoplasm. It carries out the reaction S-adenosyl-L-methionine + a thiopurine = S-adenosyl-L-homocysteine + a thiopurine S-methylether.. The protein is Thiopurine S-methyltransferase of Nitrosomonas eutropha (strain DSM 101675 / C91 / Nm57).